The chain runs to 113 residues: Iron-sulfur cluster insertion protein ErpA (113 aa).

Residues C41, C105, and C107 each coordinate iron-sulfur cluster.

Belongs to the HesB/IscA family. In terms of assembly, homodimer. Iron-sulfur cluster serves as cofactor.

In terms of biological role, required for insertion of 4Fe-4S clusters for at least IspG. In Actinobacillus pleuropneumoniae serotype 3 (strain JL03), this protein is Iron-sulfur cluster insertion protein ErpA.